We begin with the raw amino-acid sequence, 223 residues long: Deoxyribose-phosphate aldolase (223 aa).

Asp89 serves as the catalytic Proton donor/acceptor. Lys152 (schiff-base intermediate with acetaldehyde) is an active-site residue. The active-site Proton donor/acceptor is Lys181.

This sequence belongs to the DeoC/FbaB aldolase family. DeoC type 1 subfamily.

The protein resides in the cytoplasm. It carries out the reaction 2-deoxy-D-ribose 5-phosphate = D-glyceraldehyde 3-phosphate + acetaldehyde. The protein operates within carbohydrate degradation; 2-deoxy-D-ribose 1-phosphate degradation; D-glyceraldehyde 3-phosphate and acetaldehyde from 2-deoxy-alpha-D-ribose 1-phosphate: step 2/2. Functionally, catalyzes a reversible aldol reaction between acetaldehyde and D-glyceraldehyde 3-phosphate to generate 2-deoxy-D-ribose 5-phosphate. In Listeria monocytogenes serotype 4b (strain F2365), this protein is Deoxyribose-phosphate aldolase.